The following is a 308-amino-acid chain: Glycine--tRNA ligase alpha subunit (308 aa).

Belongs to the class-II aminoacyl-tRNA synthetase family. As to quaternary structure, tetramer of two alpha and two beta subunits.

Its subcellular location is the cytoplasm. The catalysed reaction is tRNA(Gly) + glycine + ATP = glycyl-tRNA(Gly) + AMP + diphosphate. This Polaromonas naphthalenivorans (strain CJ2) protein is Glycine--tRNA ligase alpha subunit.